Reading from the N-terminus, the 126-residue chain is Small ribosomal subunit protein uS13 (126 aa).

The disordered stretch occupies residues 91-126 (HRAGLPVRGQRTRTNSRTRRSAKRTVAGKKKAPSKK). Residues 100–126 (QRTRTNSRTRRSAKRTVAGKKKAPSKK) show a composition bias toward basic residues.

The protein belongs to the universal ribosomal protein uS13 family. Part of the 30S ribosomal subunit. Forms a loose heterodimer with protein S19. Forms two bridges to the 50S subunit in the 70S ribosome.

In terms of biological role, located at the top of the head of the 30S subunit, it contacts several helices of the 16S rRNA. In the 70S ribosome it contacts the 23S rRNA (bridge B1a) and protein L5 of the 50S subunit (bridge B1b), connecting the 2 subunits; these bridges are implicated in subunit movement. Contacts the tRNAs in the A and P-sites. The polypeptide is Small ribosomal subunit protein uS13 (Acaryochloris marina (strain MBIC 11017)).